The following is a 138-amino-acid chain: Holo-[acyl-carrier-protein] synthase (138 aa).

Positions 8 and 57 each coordinate Mg(2+).

It belongs to the P-Pant transferase superfamily. AcpS family. Mg(2+) serves as cofactor.

It localises to the cytoplasm. The catalysed reaction is apo-[ACP] + CoA = holo-[ACP] + adenosine 3',5'-bisphosphate + H(+). In terms of biological role, transfers the 4'-phosphopantetheine moiety from coenzyme A to a Ser of acyl-carrier-protein. This is Holo-[acyl-carrier-protein] synthase from Phenylobacterium zucineum (strain HLK1).